A 71-amino-acid polypeptide reads, in one-letter code: Sec-independent protein translocase protein TatA (71 aa).

The chain crosses the membrane as a helical span at residues Met-1 to Gly-21. The segment at Ala-48–Ser-71 is disordered.

This sequence belongs to the TatA/E family. The Tat system comprises two distinct complexes: a TatABC complex, containing multiple copies of TatA, TatB and TatC subunits, and a separate TatA complex, containing only TatA subunits. Substrates initially bind to the TatABC complex, which probably triggers association of the separate TatA complex to form the active translocon.

It localises to the cell inner membrane. In terms of biological role, part of the twin-arginine translocation (Tat) system that transports large folded proteins containing a characteristic twin-arginine motif in their signal peptide across membranes. TatA could form the protein-conducting channel of the Tat system. This is Sec-independent protein translocase protein TatA from Bordetella avium (strain 197N).